We begin with the raw amino-acid sequence, 82 residues long: Vejovine (82 aa).

Positions 1–22 (MNAKTLFVVFLIGMLVTEQVEA) are cleaved as a signal peptide. Residues 70–82 (MTLDEIVDAMYYD) constitute a propeptide that is removed on maturation.

The protein belongs to the non-disulfide-bridged peptide (NDBP) superfamily. Long chain multifunctional peptide (group 2) family. As to expression, expressed by the venom gland.

The protein localises to the secreted. The protein resides in the target cell membrane. Its function is as follows. Displays significant potent antimicrobial activity against clinical isolates of Gram-negative multidrug resistant strains of E.coli, P.aeruginosa and A.baumanii with MIC values as low as 4.4 uM. Additionally, it displays low cytolytic and hemolytic activity against human erythrocytes reaching 50% hemolysis at 100 uM. This is Vejovine from Vaejovis mexicanus (Mexican scorpion).